A 392-amino-acid polypeptide reads, in one-letter code: Homeobox protein engrailed-1 (392 aa).

Disordered stretches follow at residues 1-100 (MEEQ…AQLH), 132-164 (ARGG…TRAP), 219-251 (KPSD…PAIL), and 282-306 (SDRP…DKRP). Residues 14-36 (SALGAAAAATPGGLSLSLSPGAS) are compositionally biased toward low complexity. 2 stretches are compositionally biased toward pro residues: residues 51 to 66 (SPQP…PCLP) and 75 to 84 (PPHPPPPPPQ). A compositionally biased stretch (low complexity) spans 85 to 100 (HLAAPAHQPQPAAQLH). A compositionally biased stretch (gly residues) spans 223 to 236 (TGGGGSGGGAGSPG). The segment at residues 303–362 (DKRPRTAFTAEQLQRLKAEFQANRYITEQRRQTLAQELSLNESQIKIWFQNKRAKIKKAT) is a DNA-binding region (homeobox).

Belongs to the engrailed homeobox family.

The protein localises to the nucleus. In terms of biological role, required for proper formation of the apical ectodermal ridge and correct dorsal-ventral patterning in the limb. This chain is Homeobox protein engrailed-1 (EN1), found in Homo sapiens (Human).